A 111-amino-acid chain; its full sequence is MTRDGDNSELNQIKSKIQEHLVSSGNYELISKQLKLQLIESGWYDKVAQIAMDELNNSSSKDTKDGGRAYTTKSLSDLYTVVKPKAEGLVPNEVRENMLKRIELYLDDLIE.

The protein belongs to the ENY2 family. Component of the nuclear pore complex (NPC)-associated TREX-2 complex (transcription and export complex 2), composed of at least SUS1, SAC3, THP1, SEM1, and CDC31. TREX-2 contains 2 SUS1 chains. The TREX-2 complex interacts with the nucleoporin NUP1. Component of the 1.8 MDa SAGA transcription coactivator-HAT complex. SAGA is built of 5 distinct domains with specialized functions. Within the SAGA complex, SUS1, SGF11, SGF73 and UBP8 form an additional subcomplex of SAGA called the DUB module (deubiquitination module). Interacts directly with THP1, SAC3, SGF11, and with the RNA polymerase II.

It is found in the nucleus. It localises to the nucleoplasm. The protein resides in the cytoplasm. Its subcellular location is the P-body. Involved in mRNA export coupled transcription activation by association with both the TREX-2 and the SAGA complexes. At the promoters, SAGA is required for recruitment of the basal transcription machinery. It influences RNA polymerase II transcriptional activity through different activities such as TBP interaction and promoter selectivity, interaction with transcription activators, and chromatin modification through histone acetylation and deubiquitination. Within the SAGA complex, participates in a subcomplex required for deubiquitination of H2B and for the maintenance of steady-state H3 methylation levels. The TREX-2 complex functions in docking export-competent ribonucleoprotein particles (mRNPs) to the nuclear entrance of the nuclear pore complex (nuclear basket). TREX-2 participates in mRNA export and accurate chromatin positioning in the nucleus by tethering genes to the nuclear periphery. May also be involved in cytoplasmic mRNA decay by interaction with components of P-bodies. The protein is Transcription and mRNA export factor SUS1 of Lodderomyces elongisporus (strain ATCC 11503 / CBS 2605 / JCM 1781 / NBRC 1676 / NRRL YB-4239) (Yeast).